The following is a 116-amino-acid chain: Large ribosomal subunit protein eL30 (116 aa).

Belongs to the eukaryotic ribosomal protein eL30 family. As to quaternary structure, component of the large ribosomal subunit.

The protein resides in the cytoplasm. In terms of biological role, component of the large ribosomal subunit. The ribosome is a large ribonucleoprotein complex responsible for the synthesis of proteins in the cell. The protein is Large ribosomal subunit protein eL30 (rpl30) of Ictalurus punctatus (Channel catfish).